The following is a 145-amino-acid chain: MIALIQRVSRASVTVADEVTGEIGPGLLVLLGVEKDDDEQKANRLCERVLGYRIFSDAEGKMNLNVQQAGGSVLVVSQFTLAADTERGMRPSFSKGAAPDRAEALYEYFVARCRQQEMHTQTGRFAADMQVSLVNDGPVTFWLQV.

Residues 137–138 (GP) carry the Gly-cisPro motif, important for rejection of L-amino acids motif.

Belongs to the DTD family. In terms of assembly, homodimer.

The protein localises to the cytoplasm. It carries out the reaction glycyl-tRNA(Ala) + H2O = tRNA(Ala) + glycine + H(+). The catalysed reaction is a D-aminoacyl-tRNA + H2O = a tRNA + a D-alpha-amino acid + H(+). Functionally, an aminoacyl-tRNA editing enzyme that deacylates mischarged D-aminoacyl-tRNAs. Also deacylates mischarged glycyl-tRNA(Ala), protecting cells against glycine mischarging by AlaRS. Acts via tRNA-based rather than protein-based catalysis; rejects L-amino acids rather than detecting D-amino acids in the active site. By recycling D-aminoacyl-tRNA to D-amino acids and free tRNA molecules, this enzyme counteracts the toxicity associated with the formation of D-aminoacyl-tRNA entities in vivo and helps enforce protein L-homochirality. This chain is D-aminoacyl-tRNA deacylase, found in Klebsiella pneumoniae subsp. pneumoniae (strain ATCC 700721 / MGH 78578).